Reading from the N-terminus, the 360-residue chain is Phospho-N-acetylmuramoyl-pentapeptide-transferase (360 aa).

The next 10 helical transmembrane spans lie at 26 to 46 (SIMALLTAMAIGLWIGPKVIN), 73 to 93 (TMGGIMILVSIGVSSLLWADL), 98 to 118 (VWFTLFVLFGYGIVGFVDDYW), 132 to 152 (WKYFWLSFIAFIAAFSMYAMG), 168 to 188 (VMPQLGLFYIILAYFVIVGTS), 199 to 219 (GLAIVPTIMVTAAFALIAWAT), 236 to 256 (SGELAIMCTAIVGAGLGFLWY), 263 to 283 (VFMGDVGSLSLGGALGVIAVL), 288 to 308 (LLLLVMGGVFVVEALSVILQV), and 338 to 358 (VIVRFWIITLVLVLVGLVTLK).

This sequence belongs to the glycosyltransferase 4 family. MraY subfamily. Mg(2+) serves as cofactor.

The protein resides in the cell inner membrane. It carries out the reaction UDP-N-acetyl-alpha-D-muramoyl-L-alanyl-gamma-D-glutamyl-meso-2,6-diaminopimeloyl-D-alanyl-D-alanine + di-trans,octa-cis-undecaprenyl phosphate = di-trans,octa-cis-undecaprenyl diphospho-N-acetyl-alpha-D-muramoyl-L-alanyl-D-glutamyl-meso-2,6-diaminopimeloyl-D-alanyl-D-alanine + UMP. It participates in cell wall biogenesis; peptidoglycan biosynthesis. In terms of biological role, catalyzes the initial step of the lipid cycle reactions in the biosynthesis of the cell wall peptidoglycan: transfers peptidoglycan precursor phospho-MurNAc-pentapeptide from UDP-MurNAc-pentapeptide onto the lipid carrier undecaprenyl phosphate, yielding undecaprenyl-pyrophosphoryl-MurNAc-pentapeptide, known as lipid I. The chain is Phospho-N-acetylmuramoyl-pentapeptide-transferase from Haemophilus ducreyi (strain 35000HP / ATCC 700724).